The following is a 90-amino-acid chain: Probable Fe(2+)-trafficking protein (90 aa).

Belongs to the Fe(2+)-trafficking protein family.

Could be a mediator in iron transactions between iron acquisition and iron-requiring processes, such as synthesis and/or repair of Fe-S clusters in biosynthetic enzymes. This chain is Probable Fe(2+)-trafficking protein, found in Vibrio parahaemolyticus serotype O3:K6 (strain RIMD 2210633).